The chain runs to 207 residues: Large ribosomal subunit protein bL17m (207 aa).

Residues 173–200 (EKESEHARLKEDHEDEKTVKKDWKRGDP) show a composition bias toward basic and acidic residues. Residues 173–207 (EKESEHARLKEDHEDEKTVKKDWKRGDPIPRPTYI) are disordered.

It belongs to the bacterial ribosomal protein bL17 family. Component of the mitochondrial large ribosomal subunit (mt-LSU). Mature yeast 74S mitochondrial ribosomes consist of a small (37S) and a large (54S) subunit. The 37S small subunit contains a 15S ribosomal RNA (15S mt-rRNA) and at least 32 different proteins. The 54S large subunit contains a 21S rRNA (21S mt-rRNA) and at least 45 different proteins.

It is found in the mitochondrion. Component of the mitochondrial ribosome (mitoribosome), a dedicated translation machinery responsible for the synthesis of mitochondrial genome-encoded proteins, including at least some of the essential transmembrane subunits of the mitochondrial respiratory chain. The mitoribosomes are attached to the mitochondrial inner membrane and translation products are cotranslationally integrated into the membrane. This Schizosaccharomyces pombe (strain 972 / ATCC 24843) (Fission yeast) protein is Large ribosomal subunit protein bL17m (mrpl8).